The sequence spans 1512 residues: Non-structural polyprotein 1AB (1512 aa).

Helical transmembrane passes span 190–210 (LCLW…SNAA), 295–315 (VVRF…FVLI), 323–343 (AIIS…LLPF), 360–380 (IYGL…VGLV), and 399–419 (ALAW…MAFT). Residues His524, Asp556, and Ser621 each act as charge relay system; for serine protease activity in the active site. The residue at position 753 (Tyr753) is an O-(5'-phospho-RNA)-tyrosine. The tract at residues 940–981 (PVIQQVEQQPQVEQQQQPQQPVVEEKKRTPPPKPQRKPKTGA) is disordered. The span at 941–961 (VIQQVEQQPQVEQQQQPQQPV) shows a compositional bias: low complexity. A RdRp catalytic domain is found at 1257-1390 (TQVLELDWTR…AFNPSFVNYD (134 aa)).

Belongs to the astroviridae polyprotein 1AB family. In terms of assembly, monomer. In terms of processing, cleaved by the viral and host proteases. The protease is probably autocatalytically cleaved.

Its subcellular location is the host membrane. It carries out the reaction RNA(n) + a ribonucleoside 5'-triphosphate = RNA(n+1) + diphosphate. In terms of biological role, responsible for the cleavage of the polyprotein into functional products. Protein covalently attached to the 5' extremity of the genomic and subgenomic RNAs. It may serve as a primer for the replicase. This is Non-structural polyprotein 1AB (ORF1) from Gallus gallus (Chicken).